Consider the following 240-residue polypeptide: Proteasome subunit beta type-1 (240 aa).

Position 1 is an N-acetylmethionine (Met1). A propeptide spanning residues 1-27 is cleaved from the precursor; the sequence is MLSTAAYRDPDRELVMGPQGSAGPVQM. O-linked (GlcNAc) serine glycosylation is present at Ser57. Residues Ser61 and Ser67 each carry the phosphoserine modification. A Phosphotyrosine modification is found at Tyr149. At Ser161 the chain carries Phosphoserine. N6-acetyllysine is present on Lys203. Ser208 carries an O-linked (GlcNAc) serine glycan.

This sequence belongs to the peptidase T1B family. As to quaternary structure, the 26S proteasome consists of a 20S proteasome core and two 19S regulatory subunits. The 20S proteasome core is a barrel-shaped complex made of 28 subunits that are arranged in four stacked rings. The two outer rings are each formed by seven alpha subunits, and the two inner rings are formed by seven beta subunits. The proteolytic activity is exerted by three beta-subunits PSMB5, PSMB6 and PSMB7. Interacts with SERPINB2. Interacts with RFPL4A. As to expression, ubiquitous.

Its subcellular location is the cytoplasm. It is found in the nucleus. In terms of biological role, non-catalytic component of the 20S core proteasome complex involved in the proteolytic degradation of most intracellular proteins. This complex plays numerous essential roles within the cell by associating with different regulatory particles. Associated with two 19S regulatory particles, forms the 26S proteasome and thus participates in the ATP-dependent degradation of ubiquitinated proteins. The 26S proteasome plays a key role in the maintenance of protein homeostasis by removing misfolded or damaged proteins that could impair cellular functions, and by removing proteins whose functions are no longer required. Associated with the PA200 or PA28, the 20S proteasome mediates ubiquitin-independent protein degradation. This type of proteolysis is required in several pathways including spermatogenesis (20S-PA200 complex) or generation of a subset of MHC class I-presented antigenic peptides (20S-PA28 complex). The polypeptide is Proteasome subunit beta type-1 (Psmb1) (Rattus norvegicus (Rat)).